The sequence spans 846 residues: Vinculin (846 aa).

The segment at Met1–Glu257 is interaction with TLN. The stretch at Arg315–Glu370 forms a coiled coil. Residues Trp617–Leu646 are disordered.

This sequence belongs to the vinculin/alpha-catenin family. In terms of assembly, monomer. Interacts with TLN (talin); the interaction facilitates VIN1 binding to F-actin. As to expression, expressed in epithelial tissues, specifically the pinacoderm (outer epithelium) and choanoderm (feeding epithelium) (at protein level). Also detected in migratory cells of the mesohyl (at protein level).

Its subcellular location is the cytoplasm. The protein resides in the cell cortex. The protein localises to the cell projection. It is found in the filopodium. It localises to the cytoskeleton. In terms of biological role, actin filament (F-actin)-binding protein which may play a role in cell-cell adhesion. The chain is Vinculin from Oscarella pearsei (Sponge).